Here is a 375-residue protein sequence, read N- to C-terminus: Protein RecA (375 aa).

88 to 95 is an ATP binding site; the sequence is GPESSGKT.

It belongs to the RecA family.

It is found in the cytoplasm. In terms of biological role, can catalyze the hydrolysis of ATP in the presence of single-stranded DNA, the ATP-dependent uptake of single-stranded DNA by duplex DNA, and the ATP-dependent hybridization of homologous single-stranded DNAs. It interacts with LexA causing its activation and leading to its autocatalytic cleavage. In Rhodopirellula baltica (strain DSM 10527 / NCIMB 13988 / SH1), this protein is Protein RecA.